We begin with the raw amino-acid sequence, 333 residues long: Fructose-1,6-bisphosphatase class 1 (333 aa).

Mg(2+) is bound by residues E92, D113, L115, and D116. Residues 116–119, N209, Y242, and K272 each bind substrate; that span reads DGSS. Mg(2+) is bound at residue E278.

This sequence belongs to the FBPase class 1 family. Homotetramer. The cofactor is Mg(2+).

It localises to the cytoplasm. The enzyme catalyses beta-D-fructose 1,6-bisphosphate + H2O = beta-D-fructose 6-phosphate + phosphate. It participates in carbohydrate biosynthesis; Calvin cycle. The polypeptide is Fructose-1,6-bisphosphatase class 1 (Chlorobaculum tepidum (strain ATCC 49652 / DSM 12025 / NBRC 103806 / TLS) (Chlorobium tepidum)).